The sequence spans 187 residues: Protein GrpE (187 aa).

Residues 1 to 25 (MADEQNLDNRAPEETPAAEGTSAGE) form a disordered region.

It belongs to the GrpE family. As to quaternary structure, homodimer.

Its subcellular location is the cytoplasm. Participates actively in the response to hyperosmotic and heat shock by preventing the aggregation of stress-denatured proteins, in association with DnaK and GrpE. It is the nucleotide exchange factor for DnaK and may function as a thermosensor. Unfolded proteins bind initially to DnaJ; upon interaction with the DnaJ-bound protein, DnaK hydrolyzes its bound ATP, resulting in the formation of a stable complex. GrpE releases ADP from DnaK; ATP binding to DnaK triggers the release of the substrate protein, thus completing the reaction cycle. Several rounds of ATP-dependent interactions between DnaJ, DnaK and GrpE are required for fully efficient folding. The protein is Protein GrpE of Azotobacter vinelandii (strain DJ / ATCC BAA-1303).